The primary structure comprises 222 residues: Uracil-DNA glycosylase (222 aa).

Aspartate 66 (proton acceptor) is an active-site residue.

The protein belongs to the uracil-DNA glycosylase (UDG) superfamily. UNG family.

The protein localises to the cytoplasm. The catalysed reaction is Hydrolyzes single-stranded DNA or mismatched double-stranded DNA and polynucleotides, releasing free uracil.. Excises uracil residues from the DNA which can arise as a result of misincorporation of dUMP residues by DNA polymerase or due to deamination of cytosine. The polypeptide is Uracil-DNA glycosylase (Porphyromonas gingivalis (strain ATCC BAA-308 / W83)).